The primary structure comprises 601 residues: ATP-dependent lipid A-core flippase (601 aa).

An ABC transmembrane type-1 domain is found at 28–328 (LLSVCGLIVY…LTRVNAEFQR (301 aa)). 6 helical membrane-spanning segments follow: residues 32–52 (CGLI…GPFI), 81–101 (VLLM…FANF), 160–180 (ALIS…LMFY), 183–203 (WKLS…ITIV), 267–287 (AVSQ…VLYA), and 296–316 (DLTA…LQPI). An ABC transporter domain is found at 360–597 (LRFDNVSFSY…GGMYAKLYQM (238 aa)). 394–401 (GRSGSGKS) serves as a coordination point for ATP.

Belongs to the ABC transporter superfamily. Lipid exporter (TC 3.A.1.106) family. In terms of assembly, homodimer.

The protein resides in the cell inner membrane. It catalyses the reaction ATP + H2O + lipid A-core oligosaccharideSide 1 = ADP + phosphate + lipid A-core oligosaccharideSide 2.. In terms of biological role, involved in lipopolysaccharide (LPS) biosynthesis. Translocates lipid A-core from the inner to the outer leaflet of the inner membrane. Transmembrane domains (TMD) form a pore in the inner membrane and the ATP-binding domain (NBD) is responsible for energy generation. The polypeptide is ATP-dependent lipid A-core flippase (Shewanella sp. (strain MR-4)).